The primary structure comprises 301 residues: tRNA dimethylallyltransferase (301 aa).

Residue 9 to 16 (GPTASGKS) participates in ATP binding. 11–16 (TASGKS) contacts substrate. Positions 34-37 (DSMQ) are interaction with substrate tRNA.

This sequence belongs to the IPP transferase family. As to quaternary structure, monomer. Requires Mg(2+) as cofactor.

It carries out the reaction adenosine(37) in tRNA + dimethylallyl diphosphate = N(6)-dimethylallyladenosine(37) in tRNA + diphosphate. Its function is as follows. Catalyzes the transfer of a dimethylallyl group onto the adenine at position 37 in tRNAs that read codons beginning with uridine, leading to the formation of N6-(dimethylallyl)adenosine (i(6)A). The sequence is that of tRNA dimethylallyltransferase from Corynebacterium glutamicum (strain ATCC 13032 / DSM 20300 / JCM 1318 / BCRC 11384 / CCUG 27702 / LMG 3730 / NBRC 12168 / NCIMB 10025 / NRRL B-2784 / 534).